The chain runs to 324 residues: MDDNRSTHSSMFGDLSTEEVTSKIILTAIIVLFMAVLFVLILHLYAKLYWWRIDQLQQQQQQQQQEQEQEEDQSSIAPPVVTRRQRRRFIFVPGQDALSNTGLTSFELSSLPIVFFRQDSCKDGLECSICLSELVKGDKARLLPKCNHSFHVECIDMWFQSHSTCPICRNTVLGPEQASSKRVEQVPDNAENAGTTNNNHDALSQLSTSSPEFPTNVLVWGRQDQVSTGNTNVGTQEDGAAGNGASQSQEAVVLDISDSSSRNHNVSSSSSSMRFIVEEEEAKSPMTTRLRSLRRFLSRDKRVGCSNSSTSNSSSSNAVASVDP.

The chain crosses the membrane as a helical span at residues 24–44; sequence IILTAIIVLFMAVLFVLILHL. An RING-type; atypical zinc finger spans residues 127–169; that stretch reads CSICLSELVKGDKARLLPKCNHSFHVECIDMWFQSHSTCPICR. 3 disordered regions span residues 179 to 210, 226 to 248, and 299 to 324; these read SSKRVEQVPDNAENAGTTNNNHDALSQLSTSS, VSTGNTNVGTQEDGAAGNGASQS, and RDKRVGCSNSSTSNSSSSNAVASVDP. Composition is skewed to polar residues over residues 192 to 210 and 226 to 235; these read NAGTTNNNHDALSQLSTSS and VSTGNTNVGT. Over residues 306-324 the composition is skewed to low complexity; sequence SNSSTSNSSSSNAVASVDP.

It belongs to the RING-type zinc finger family. ATL subfamily.

The protein localises to the membrane. It carries out the reaction S-ubiquitinyl-[E2 ubiquitin-conjugating enzyme]-L-cysteine + [acceptor protein]-L-lysine = [E2 ubiquitin-conjugating enzyme]-L-cysteine + N(6)-ubiquitinyl-[acceptor protein]-L-lysine.. It functions in the pathway protein modification; protein ubiquitination. In Arabidopsis thaliana (Mouse-ear cress), this protein is RING-H2 finger protein ATL3 (ATL3).